The primary structure comprises 186 residues: uncharacterized protein (186 aa).

The next 3 helical transmembrane spans lie at 43 to 63, 69 to 89, and 143 to 163; these read GAWVIHIVLIAALRLIFHAIP, LAWTLTNLTYMAGSFIMFHWV, and WMFLVNIWALFMVLIPKLPAV.

It localises to the endoplasmic reticulum membrane. This is an uncharacterized protein from Schizosaccharomyces pombe (strain 972 / ATCC 24843) (Fission yeast).